Here is a 264-residue protein sequence, read N- to C-terminus: uncharacterized protein (264 aa).

A run of 4 helical transmembrane segments spans residues 43-63 (VVAA…LYLI), 68-88 (FLPS…LLGI), 96-116 (ILPA…LGCI), and 150-170 (LAAK…VLAV). Residues 216–247 (SYEDALKNSSQQPSTSSSSSSPPSRPPHSVYT) are disordered. Residues 224 to 237 (SSQQPSTSSSSSSP) show a composition bias toward low complexity.

It is found in the membrane. This is an uncharacterized protein from Caenorhabditis elegans.